Here is a 133-residue protein sequence, read N- to C-terminus: Peptide methionine sulfoxide reductase MsrB (133 aa).

The MsrB domain occupies 8–130 (LDVWRELLSD…NSASLRLKPR (123 aa)). Residues cysteine 47, cysteine 50, cysteine 96, and cysteine 99 each contribute to the Zn(2+) site. Cysteine 119 functions as the Nucleophile in the catalytic mechanism.

The protein belongs to the MsrB Met sulfoxide reductase family. It depends on Zn(2+) as a cofactor.

The catalysed reaction is L-methionyl-[protein] + [thioredoxin]-disulfide + H2O = L-methionyl-(R)-S-oxide-[protein] + [thioredoxin]-dithiol. In Azotobacter vinelandii (strain DJ / ATCC BAA-1303), this protein is Peptide methionine sulfoxide reductase MsrB.